A 426-amino-acid chain; its full sequence is Probable histidine--tRNA ligase (426 aa).

This sequence belongs to the class-II aminoacyl-tRNA synthetase family. In terms of assembly, homodimer.

It is found in the cytoplasm. The catalysed reaction is tRNA(His) + L-histidine + ATP = L-histidyl-tRNA(His) + AMP + diphosphate + H(+). The polypeptide is Probable histidine--tRNA ligase (hisS) (Tropheryma whipplei (strain TW08/27) (Whipple's bacillus)).